The following is a 194-amino-acid chain: Large ribosomal subunit protein bL27c (194 aa).

The N-terminal 57 residues, 1-57, are a transit peptide targeting the chloroplast; the sequence is MAVTTSMSFNLMASFRGMSLSSSSSSSFFKGEFGPSSLRLPNKSPLSVSPFPLTIES. Residues 57–76 form a disordered region; that stretch reads SAHKKGAGSTKNGRDSKGQR.

Component of the chloroplast large ribosomal subunit (LSU). Mature 70S chloroplast ribosomes of higher plants consist of a small (30S) and a large (50S) subunit. The 30S small subunit contains 1 molecule of ribosomal RNA (16S rRNA) and 24 different proteins. The 50S large subunit contains 3 rRNA molecules (23S, 5S and 4.5S rRNA) and 33 different proteins.

It is found in the plastid. The protein resides in the chloroplast. Functionally, component of the chloroplast ribosome (chloro-ribosome), a dedicated translation machinery responsible for the synthesis of chloroplast genome-encoded proteins, including proteins of the transcription and translation machinery and components of the photosynthetic apparatus. This is Large ribosomal subunit protein bL27c (RPL27) from Spinacia oleracea (Spinach).